The primary structure comprises 109 residues: Putative ankyrin repeat protein L482 (109 aa).

ANK repeat units follow at residues 1–26, 27–56, 57–86, and 88–109; these read YLTE…NITT, NNNY…NIRS, ENNL…DIRS, and NNYA…YLVA.

This chain is Putative ankyrin repeat protein L482, found in Acanthamoeba polyphaga (Amoeba).